Reading from the N-terminus, the 391-residue chain is Succinyl-diaminopimelate desuccinylase (391 aa).

Position 78 (histidine 78) interacts with Zn(2+). Aspartate 80 is a catalytic residue. Aspartate 111 is a binding site for Zn(2+). The Proton acceptor role is filled by glutamate 145. Positions 146, 174, and 360 each coordinate Zn(2+).

The protein belongs to the peptidase M20A family. DapE subfamily. Homodimer. It depends on Zn(2+) as a cofactor. Co(2+) is required as a cofactor.

It carries out the reaction N-succinyl-(2S,6S)-2,6-diaminopimelate + H2O = (2S,6S)-2,6-diaminopimelate + succinate. The protein operates within amino-acid biosynthesis; L-lysine biosynthesis via DAP pathway; LL-2,6-diaminopimelate from (S)-tetrahydrodipicolinate (succinylase route): step 3/3. Functionally, catalyzes the hydrolysis of N-succinyl-L,L-diaminopimelic acid (SDAP), forming succinate and LL-2,6-diaminopimelate (DAP), an intermediate involved in the bacterial biosynthesis of lysine and meso-diaminopimelic acid, an essential component of bacterial cell walls. The polypeptide is Succinyl-diaminopimelate desuccinylase (Albidiferax ferrireducens (strain ATCC BAA-621 / DSM 15236 / T118) (Rhodoferax ferrireducens)).